Reading from the N-terminus, the 336-residue chain is MIVLGIESSCDETGLAIYDYSKKKLIADELYSQVKLHKKYGGVVPELASREHIAKLNLLAKKIFKETGLSFEDIDCIAYTAMPGLVGALMVGATFAKTLGLIHNIDTIAVHHLEGHLLSPLLDHNSNIEYPFVALLVSGGHTQLFEVKEFGEYSLLGESIDDAAGEAFDKTTKLLGMGYPGGVEVANLADQATDKSKYILPRPMKNKPNLDFSFSGLKTAVLNTWYDEQDQSLENKANLCYALQNAAIDVLVSKCAKALQKTKNTRLVISGGVSANKLLRHQLDLLAKNREYQIFFPPMKYCTDNGAMIALAGAYRYVNGFKDSNLEINVKARSPL.

Fe cation is bound by residues histidine 112 and histidine 116. Residues leucine 136–glycine 140, aspartate 169, glycine 182, and asparagine 276 each bind substrate. Aspartate 304 contributes to the Fe cation binding site.

Belongs to the KAE1 / TsaD family. It depends on Fe(2+) as a cofactor.

The protein localises to the cytoplasm. The enzyme catalyses L-threonylcarbamoyladenylate + adenosine(37) in tRNA = N(6)-L-threonylcarbamoyladenosine(37) in tRNA + AMP + H(+). Functionally, required for the formation of a threonylcarbamoyl group on adenosine at position 37 (t(6)A37) in tRNAs that read codons beginning with adenine. Is involved in the transfer of the threonylcarbamoyl moiety of threonylcarbamoyl-AMP (TC-AMP) to the N6 group of A37, together with TsaE and TsaB. TsaD likely plays a direct catalytic role in this reaction. The polypeptide is tRNA N6-adenosine threonylcarbamoyltransferase (Francisella tularensis subsp. holarctica (strain FTNF002-00 / FTA)).